The following is a 443-amino-acid chain: D(2) dopamine receptor (443 aa).

Topologically, residues M1–Y37 are extracellular. N-linked (GlcNAc...) asparagine glycosylation is found at N5, N17, and N23. A helical membrane pass occupies residues A38–S60. The Cytoplasmic portion of the chain corresponds to R61–N70. A helical transmembrane segment spans residues Y71–Y93. Residues L94–D108 are Extracellular-facing. C107 and C182 are oxidised to a cystine. Residues I109–I130 form a helical membrane-spanning segment. The Cytoplasmic portion of the chain corresponds to D131 to R151. The helical transmembrane segment at V152–F172 threads the bilayer. Residues G173–A188 are Extracellular-facing. The chain crosses the membrane as a helical span at residues F189–Y213. The segment at K211–Q373 is interaction with PPP1R9B. Residues I214–Q373 lie on the Cytoplasmic side of the membrane. Residues M281 to K332 are disordered. The chain crosses the membrane as a helical span at residues M374–L395. Residues N396–S409 lie on the Extracellular side of the membrane. C399 and C401 form a disulfide bridge. A helical membrane pass occupies residues A410–I431. The Cytoplasmic portion of the chain corresponds to E432–C443. Residue C443 is the site of S-palmitoyl cysteine attachment.

Belongs to the G-protein coupled receptor 1 family. In terms of assembly, forms homo- and heterooligomers with DRD4. The interaction with DRD4 may modulate agonist-induced downstream signaling. Interacts with CADPS and CADPS2. Interacts with GPRASP1, PPP1R9B and CLIC6. Interacts with ARRB2. Interacts with HTR2A. Interacts with DRD1. Interacts with KCNA2. Post-translationally, palmitoylated. Palmitoylation which is required for proper localization to the plasma membrane and stability of the receptor could be carried on by ZDHHC4, ZDHHC3 and ZDHHC8.

Its subcellular location is the cell membrane. It is found in the golgi apparatus membrane. Functionally, dopamine receptor whose activity is mediated by G proteins which inhibit adenylyl cyclase. Positively regulates postnatal regression of retinal hyaloid vessels via suppression of VEGFR2/KDR activity, downstream of OPN5. The sequence is that of D(2) dopamine receptor (DRD2) from Chlorocebus aethiops (Green monkey).